Reading from the N-terminus, the 213-residue chain is LexA repressor 2 (213 aa).

Positions 27–47 form a DNA-binding region, H-T-H motif; it reads QTEIARAFGFKGVRAAQYHLE. Residues serine 133 and lysine 170 each act as for autocatalytic cleavage activity in the active site.

It belongs to the peptidase S24 family. Homodimer.

It catalyses the reaction Hydrolysis of Ala-|-Gly bond in repressor LexA.. Represses a number of genes involved in the response to DNA damage (SOS response), including recA and lexA. In the presence of single-stranded DNA, RecA interacts with LexA causing an autocatalytic cleavage which disrupts the DNA-binding part of LexA, leading to derepression of the SOS regulon and eventually DNA repair. In Xanthomonas campestris pv. campestris (strain ATCC 33913 / DSM 3586 / NCPPB 528 / LMG 568 / P 25), this protein is LexA repressor 2.